The chain runs to 289 residues: 4-diphosphocytidyl-2-C-methyl-D-erythritol kinase (289 aa).

Lysine 16 is an active-site residue. Residue 99–109 participates in ATP binding; that stretch reads PMGGGLGGGSS. Aspartate 141 is a catalytic residue.

It belongs to the GHMP kinase family. IspE subfamily.

It carries out the reaction 4-CDP-2-C-methyl-D-erythritol + ATP = 4-CDP-2-C-methyl-D-erythritol 2-phosphate + ADP + H(+). The protein operates within isoprenoid biosynthesis; isopentenyl diphosphate biosynthesis via DXP pathway; isopentenyl diphosphate from 1-deoxy-D-xylulose 5-phosphate: step 3/6. Its function is as follows. Catalyzes the phosphorylation of the position 2 hydroxy group of 4-diphosphocytidyl-2C-methyl-D-erythritol. The protein is 4-diphosphocytidyl-2-C-methyl-D-erythritol kinase of Ralstonia pickettii (strain 12J).